Consider the following 432-residue polypeptide: 3-phosphoshikimate 1-carboxyvinyltransferase (432 aa).

Lysine 23, serine 24, and arginine 28 together coordinate 3-phosphoshikimate. Lysine 23 serves as a coordination point for phosphoenolpyruvate. Glycine 95 and arginine 123 together coordinate phosphoenolpyruvate. Serine 167, glutamine 169, aspartate 317, and lysine 344 together coordinate 3-phosphoshikimate. Glutamine 169 serves as a coordination point for phosphoenolpyruvate. The Proton acceptor role is filled by aspartate 317. The phosphoenolpyruvate site is built by arginine 348 and arginine 390.

The protein belongs to the EPSP synthase family. In terms of assembly, monomer.

The protein localises to the cytoplasm. The catalysed reaction is 3-phosphoshikimate + phosphoenolpyruvate = 5-O-(1-carboxyvinyl)-3-phosphoshikimate + phosphate. Its pathway is metabolic intermediate biosynthesis; chorismate biosynthesis; chorismate from D-erythrose 4-phosphate and phosphoenolpyruvate: step 6/7. Catalyzes the transfer of the enolpyruvyl moiety of phosphoenolpyruvate (PEP) to the 5-hydroxyl of shikimate-3-phosphate (S3P) to produce enolpyruvyl shikimate-3-phosphate and inorganic phosphate. In Staphylococcus aureus (strain MRSA252), this protein is 3-phosphoshikimate 1-carboxyvinyltransferase.